The chain runs to 135 residues: M-zodatoxin-Lt8q (135 aa).

A signal peptide spans 1-20 (MKYFVVALALVAAFACIAES). A propeptide spanning residues 21-60 (KPAESEHELAEVEEENELADLEDAVWLEHLADLSDLEEAR) is cleaved from the precursor.

The protein belongs to the cationic peptide 06 (cytoinsectotoxin) family. Expressed by the venom gland.

The protein resides in the secreted. In terms of biological role, insecticidal, cytolytic and antimicrobial peptide. Forms voltage-dependent, ion-permeable channels in membranes. At high concentration causes cell membrane lysis. The protein is M-zodatoxin-Lt8q (cit 1-16) of Lachesana tarabaevi (Spider).